Here is a 341-residue protein sequence, read N- to C-terminus: Phenylalanine--tRNA ligase alpha subunit (341 aa).

A Mg(2+)-binding site is contributed by glutamate 254.

It belongs to the class-II aminoacyl-tRNA synthetase family. Phe-tRNA synthetase alpha subunit type 1 subfamily. In terms of assembly, tetramer of two alpha and two beta subunits. It depends on Mg(2+) as a cofactor.

It localises to the cytoplasm. It catalyses the reaction tRNA(Phe) + L-phenylalanine + ATP = L-phenylalanyl-tRNA(Phe) + AMP + diphosphate + H(+). The protein is Phenylalanine--tRNA ligase alpha subunit of Chlorobium limicola (strain DSM 245 / NBRC 103803 / 6330).